A 342-amino-acid polypeptide reads, in one-letter code: Inositol-tetrakisphosphate 1-kinase 5 (342 aa).

2 residues coordinate 1D-myo-inositol 1,3,4-trisphosphate: K25 and K67. Residues R102 and K154 each coordinate ATP. 1D-myo-inositol 1,3,4-trisphosphate contacts are provided by H165 and K197. ATP-binding positions include 186–197 (QEFVNHGGVIFK) and S212. Mg(2+) is bound by residues D283, D298, and N300. N300 provides a ligand contact to 1D-myo-inositol 1,3,4-trisphosphate.

The protein belongs to the ITPK1 family. In terms of assembly, monomer. It depends on Mg(2+) as a cofactor. In terms of tissue distribution, expressed in roots, leaves, flowers, anthers and embryos.

The catalysed reaction is 1D-myo-inositol 3,4,5,6-tetrakisphosphate + ATP = 1D-myo-inositol 1,3,4,5,6-pentakisphosphate + ADP + H(+). It catalyses the reaction 1D-myo-inositol 1,3,4-trisphosphate + ATP = 1D-myo-inositol 1,3,4,5-tetrakisphosphate + ADP + H(+). It carries out the reaction 1D-myo-inositol 1,3,4-trisphosphate + ATP = 1D-myo-inositol 1,3,4,6-tetrakisphosphate + ADP + H(+). Functionally, kinase that can phosphorylate various inositol polyphosphate such as Ins(3,4,5,6)P4 or Ins(1,3,4)P3 and participates in phytic acid biosynthesis in developing seeds. Phytic acid is the primary storage form of phosphorus in cereal grains and other plant seeds. This chain is Inositol-tetrakisphosphate 1-kinase 5 (ITPK5), found in Oryza sativa subsp. japonica (Rice).